The sequence spans 342 residues: Ribosomal RNA small subunit methyltransferase C (342 aa).

Belongs to the methyltransferase superfamily. RsmC family. In terms of assembly, monomer.

It localises to the cytoplasm. It carries out the reaction guanosine(1207) in 16S rRNA + S-adenosyl-L-methionine = N(2)-methylguanosine(1207) in 16S rRNA + S-adenosyl-L-homocysteine + H(+). In terms of biological role, specifically methylates the guanine in position 1207 of 16S rRNA in the 30S particle. This Salmonella paratyphi B (strain ATCC BAA-1250 / SPB7) protein is Ribosomal RNA small subunit methyltransferase C.